A 422-amino-acid polypeptide reads, in one-letter code: Protein phosphatase methylesterase 1 (422 aa).

Positions 1–27 are disordered; sequence MSDMFRKSVLNKLPHLPPTRAPWADES. Catalysis depends on residues serine 207, aspartate 234, and histidine 371.

It belongs to the AB hydrolase superfamily.

The catalysed reaction is [phosphatase 2A protein]-C-terminal L-leucine methyl ester + H2O = [phosphatase 2A protein]-C-terminal L-leucine + methanol + H(+). Its function is as follows. Demethylates proteins that have been reversibly carboxymethylated. Demethylates the phosphatase PP2A catalytic subunit. This chain is Protein phosphatase methylesterase 1 (PPE1), found in Cryptococcus neoformans var. neoformans serotype D (strain JEC21 / ATCC MYA-565) (Filobasidiella neoformans).